The primary structure comprises 213 residues: Heavy metal-binding protein HIP (213 aa).

Residues 80 to 213 (FKSHHVAFSA…MSTFTGFMLH (134 aa)) form the C1q domain.

In terms of tissue distribution, pallium, gill and liver.

It localises to the secreted. Its function is as follows. Binds heavy metals. May function as a carrier of divalent cations in plasma. In Mytilus edulis (Blue mussel), this protein is Heavy metal-binding protein HIP.